The sequence spans 205 residues: uncharacterized protein (205 aa).

Residues serine 119 and histidine 160 each act as charge relay system in the active site.

The protein belongs to the peptidase S51 family.

This is an uncharacterized protein from Listeria monocytogenes serovar 1/2a (strain ATCC BAA-679 / EGD-e).